A 366-amino-acid chain; its full sequence is NADH-quinone oxidoreductase subunit H (366 aa).

Helical transmembrane passes span 27–47 (LLLI…LTFA), 99–119 (FLFL…WAVV), 134–154 (LLYI…AGWA), 168–188 (AAQV…VLMM), 206–226 (FLNW…ISGV), 268–288 (ILVA…PVDI), 294–314 (IPGM…FLWF), and 329–349 (LGWK…GMVM).

This sequence belongs to the complex I subunit 1 family. As to quaternary structure, NDH-1 is composed of 14 different subunits. Subunits NuoA, H, J, K, L, M, N constitute the membrane sector of the complex.

The protein resides in the cell inner membrane. The catalysed reaction is a quinone + NADH + 5 H(+)(in) = a quinol + NAD(+) + 4 H(+)(out). NDH-1 shuttles electrons from NADH, via FMN and iron-sulfur (Fe-S) centers, to quinones in the respiratory chain. The immediate electron acceptor for the enzyme in this species is believed to be ubiquinone. Couples the redox reaction to proton translocation (for every two electrons transferred, four hydrogen ions are translocated across the cytoplasmic membrane), and thus conserves the redox energy in a proton gradient. This subunit may bind ubiquinone. This chain is NADH-quinone oxidoreductase subunit H, found in Nitrosomonas europaea (strain ATCC 19718 / CIP 103999 / KCTC 2705 / NBRC 14298).